A 264-amino-acid chain; its full sequence is PDZ domain-containing protein 9 (264 aa).

Residues 30-109 (QTKLTVGSLG…GTVLQIKVYR (80 aa)) form the PDZ domain.

The protein is PDZ domain-containing protein 9 (PDZD9) of Homo sapiens (Human).